A 275-amino-acid chain; its full sequence is Lectin DB58 (275 aa).

An N-terminal signal peptide occupies residues 1-22 (MASSTVSVVLSLFLLLLTQAYS). N-linked (GlcNAc...) asparagine glycosylation is found at asparagine 34 and asparagine 101.

This sequence belongs to the leguminous lectin family. In terms of assembly, heterodimer, composed of an alpha and a beta subunit derived from a single precursor. Post-translationally, leu-264 is missing in a major portion of the beta subunit, suggesting an origin by sequential removal of amino acids rather than a processing by endoproteolytic cleavage.

Its function is as follows. Metalloglycoprotein, containing Ca, Mg, Mn, and Zn and the carbohydrates galactose, glucosamine, mannose, and fucose. It agglutinates erythrocytes of blood group A1. The chain is Lectin DB58 from Vigna unguiculata subsp. cylindrica (Horse gram).